The chain runs to 587 residues: Folylpolyglutamate synthase, mitochondrial (587 aa).

The N-terminal 42 residues, methionine 1 to glycine 42, are a transit peptide targeting the mitochondrion. Glycine 106–serine 109 contacts ATP. Residues serine 130, glutamate 200, and histidine 228 each coordinate Mg(2+). ATP contacts are provided by arginine 363 and aspartate 377. Residues proline 484–histidine 508 are disordered. Serine 539 is subject to Phosphoserine.

The protein belongs to the folylpolyglutamate synthase family. Monomer. Requires a monovalent cation as cofactor.

The protein resides in the mitochondrion inner membrane. It is found in the mitochondrion matrix. The protein localises to the cytoplasm. The enzyme catalyses (6S)-5,6,7,8-tetrahydrofolyl-(gamma-L-Glu)(n) + L-glutamate + ATP = (6S)-5,6,7,8-tetrahydrofolyl-(gamma-L-Glu)(n+1) + ADP + phosphate + H(+). Its pathway is cofactor biosynthesis; tetrahydrofolylpolyglutamate biosynthesis. In terms of biological role, catalyzes conversion of folates to polyglutamate derivatives allowing concentration of folate compounds in the cell and the intracellular retention of these cofactors, which are important substrates for most of the folate-dependent enzymes that are involved in one-carbon transfer reactions involved in purine, pyrimidine and amino acid synthesis. The protein is Folylpolyglutamate synthase, mitochondrial (FPGS) of Cricetulus griseus (Chinese hamster).